A 518-amino-acid chain; its full sequence is Cytochrome P450 26C1 (518 aa).

Residues 293–313 traverse the membrane as a helical segment; the sequence is LLFAAFFTTASASTSLILLLL. Cys455 is a binding site for heme.

This sequence belongs to the cytochrome P450 family. Requires heme as cofactor.

It localises to the membrane. The catalysed reaction is an organic molecule + reduced [NADPH--hemoprotein reductase] + O2 = an alcohol + oxidized [NADPH--hemoprotein reductase] + H2O + H(+). It catalyses the reaction all-trans-retinoate + reduced [NADPH--hemoprotein reductase] + O2 = all-trans-4-hydroxyretinoate + oxidized [NADPH--hemoprotein reductase] + H2O + H(+). The enzyme catalyses all-trans-4-hydroxyretinoate + reduced [NADPH--hemoprotein reductase] + O2 = all-trans-4-oxoretinoate + oxidized [NADPH--hemoprotein reductase] + 2 H2O + H(+). It carries out the reaction 9-cis-retinoate + reduced [NADPH--hemoprotein reductase] + O2 = 9-cis-4-hydroxyretinoate + oxidized [NADPH--hemoprotein reductase] + H2O + H(+). The catalysed reaction is 9-cis-4-hydroxyretinoate + reduced [NADPH--hemoprotein reductase] + O2 = 9-cis-4-oxoretinoate + oxidized [NADPH--hemoprotein reductase] + 2 H2O + H(+). It catalyses the reaction all-trans-4-hydroxy-13,14-dihydroretinoate + reduced [NADPH--hemoprotein reductase] + O2 = all-trans-4-oxo-13,14-dihydroretinoate + oxidized [NADPH--hemoprotein reductase] + 2 H2O + H(+). The enzyme catalyses all-trans-13,14-dihydroretinoate + reduced [NADPH--hemoprotein reductase] + O2 = all-trans-4-hydroxy-13,14-dihydroretinoate + oxidized [NADPH--hemoprotein reductase] + H2O + H(+). In terms of biological role, a cytochrome P450 monooxygenase involved in the metabolism of retinoates (RAs), the active metabolites of vitamin A, and critical signaling molecules in animals. RAs exist as at least four different isomers: all-trans-RA (atRA), 9-cis-RA, 13-cis-RA, and 9,13-dicis-RA, where atRA is considered to be the biologically active isomer, although 9-cis-RA and 13-cis-RA also have activity. Catalyzes the oxidation of atRA primarily at C-4. Oxidation of atRA limits its biological activity and initiates a degradative process leading to its eventual elimination, thereby contributes to the regulation of atRA homeostasis and signaling. Able to metabolize other RAs such as 9-cis with high efficiency. Can oxidize all-trans-13,14-dihydroretinoate (DRA) to metabolites which could include all-trans-4-oxo-DRA, all-trans-4-hydroxy-DRA, all-trans-5,8-epoxy-DRA, and all-trans-18-hydroxy-DRA. Shares sequence similarity with other CYP26 family members, but has higher affinity to 9-cis-RA and is much less sensitive to the inhibitory effects of ketoconazole. In cooperation with Cyp26a1, contributes to the CNS patterning and the development of regions of higher visual acuity. The sequence is that of Cytochrome P450 26C1 from Mus musculus (Mouse).